The primary structure comprises 677 residues: Regulator of G-protein signaling 9 (677 aa).

One can recognise a DEP domain in the interval 30–105 (PETGVRMQNQ…PDSSLYRFQT (76 aa)). The G protein gamma domain maps to 219–280 (VTAVRKEIMY…ITDDTQFWDL (62 aa)). The region spanning 295 to 416 (RWAFNFSELI…SPIYKEMLAK (122 aa)) is the RGS domain. Disordered regions lie at residues 530–571 (SSGL…RAPL) and 639–677 (DSGP…GKAG).

As to quaternary structure, heterodimer with GNB5. Interacts with RGS7BP, leading to regulate the subcellular location of the heterodimer formed with GNB5. Component of the RGS9-1-Gbeta5 complex composed of RGS9 (RGS9-1), Gbeta5 (GNB5) and RGS9BP. Interacts with PDE6G and GNAT1. Expressed in the central nervous system. Isoform RGS9L is found in striatum, hypothalamus and nucleus accumbens while isoform RGS9S is expressed in retina and pineal gland.

It localises to the membrane. In terms of biological role, inhibits signal transduction by increasing the GTPase activity of G protein alpha subunits thereby driving them into their inactive GDP-bound form. Binds to GNAT1. Involved in phototransduction; key element in the recovery phase of visual transduction. In Rattus norvegicus (Rat), this protein is Regulator of G-protein signaling 9 (Rgs9).